Here is a 244-residue protein sequence, read N- to C-terminus: tRNA (guanine-N(1)-)-methyltransferase (244 aa).

S-adenosyl-L-methionine-binding positions include Gly113 and 132-137 (IGDYVL).

This sequence belongs to the RNA methyltransferase TrmD family. As to quaternary structure, homodimer.

The protein resides in the cytoplasm. It carries out the reaction guanosine(37) in tRNA + S-adenosyl-L-methionine = N(1)-methylguanosine(37) in tRNA + S-adenosyl-L-homocysteine + H(+). Its function is as follows. Specifically methylates guanosine-37 in various tRNAs. This chain is tRNA (guanine-N(1)-)-methyltransferase, found in Shouchella clausii (strain KSM-K16) (Alkalihalobacillus clausii).